Consider the following 1045-residue polypeptide: Endoglucanase B (1045 aa).

The signal sequence occupies residues Met1–Ala33. Positions Ala34–Pro492 are catalytic. Residue Asp91 is the Nucleophile of the active site. Catalysis depends on residues His410, Asp449, and Glu458. Positions Asp493–Thr642 constitute a CBM3 domain. Linker ('hinge') (Pro-Thr box) regions lie at residues Thr644–Pro650, Ala734–Pro748, Ala831–Ala846, and Ser931–Pro944. 3 consecutive Fibronectin type-III domains span residues Thr653–Thr743, Thr751–Pro840, and Val849–Val940. Residues Pro939 to Gly1045 form the CBM2 domain. The cysteines at positions 946 and 1044 are disulfide-linked.

It belongs to the glycosyl hydrolase 9 (cellulase E) family.

The enzyme catalyses Endohydrolysis of (1-&gt;4)-beta-D-glucosidic linkages in cellulose, lichenin and cereal beta-D-glucans.. In terms of biological role, the biological conversion of cellulose to glucose generally requires three types of hydrolytic enzymes: (1) Endoglucanases which cut internal beta-1,4-glucosidic bonds; (2) Exocellobiohydrolases that cut the disaccharide cellobiose from the non-reducing end of the cellulose polymer chain; (3) Beta-1,4-glucosidases which hydrolyze the cellobiose and other short cello-oligosaccharides to glucose. The sequence is that of Endoglucanase B (cenB) from Cellulomonas fimi.